A 128-amino-acid chain; its full sequence is Large ribosomal subunit protein uL22 (128 aa).

This sequence belongs to the universal ribosomal protein uL22 family. As to quaternary structure, part of the 50S ribosomal subunit.

Functionally, this protein binds specifically to 23S rRNA; its binding is stimulated by other ribosomal proteins, e.g. L4, L17, and L20. It is important during the early stages of 50S assembly. It makes multiple contacts with different domains of the 23S rRNA in the assembled 50S subunit and ribosome. In terms of biological role, the globular domain of the protein is located near the polypeptide exit tunnel on the outside of the subunit, while an extended beta-hairpin is found that lines the wall of the exit tunnel in the center of the 70S ribosome. The sequence is that of Large ribosomal subunit protein uL22 from Prochlorococcus marinus (strain MIT 9312).